The following is a 1480-amino-acid chain: Cystic fibrosis transmembrane conductance regulator (1480 aa).

Topologically, residues 1–77 (MQRSPLEKAS…KLINALRRCF (77 aa)) are cytoplasmic. Residues 78–98 (FWRFMFYGIFLYLGEVTKAVQ) traverse the membrane as a helical segment. Positions 81-365 (FMFYGIFLYL…WAVQTWYDSL (285 aa)) constitute an ABC transmembrane type-1 1 domain. The Extracellular segment spans residues 99–122 (PLLLGRIIASYDPDNKEERSIAIY). A helical membrane pass occupies residues 123 to 146 (LGIGLCLLFIVRTLLLHPAIFGLH). Residues 147–195 (HIGMQMRIAMFSLIYKKTLKLSSRVLDKISIGQLVSLLSNNLNKFDEGL) are Cytoplasmic-facing. Residues 196–216 (ALAHFVWIAPLQVALLMGLIW) form a helical membrane-spanning segment. The Extracellular portion of the chain corresponds to 217–222 (ELLQAS). Residues 223–243 (AFCGLGFLIVLALFQAGLGRM) form a helical membrane-spanning segment. The Cytoplasmic portion of the chain corresponds to 244–298 (MMKYRDQRAGKISERLVITSEMIENIQSVKAYCWEEAMEKMIENLRQTELKLTRK). Residues 299-319 (AAYVRYFNSSAFFFSGFFVVF) traverse the membrane as a helical segment. Residues 320–339 (LSVLPYALIKGIILRKIFTT) are Extracellular-facing. A helical membrane pass occupies residues 340–358 (ISFCIVLRMAVTRQFPWAV). Topologically, residues 359–858 (QTWYDSLGAI…YLRYITVHKS (500 aa)) are cytoplasmic. ATP-binding positions include tryptophan 401, serine 434, 458–465 (GSTGAGKT), and glutamine 493. An ABC transporter 1 domain is found at 423-646 (NGDDSLFFSN…RPDFSSKLMG (224 aa)). Cysteine 524 carries the S-palmitoyl cysteine lipid modification. 2 positions are modified to phosphoserine: serine 549 and serine 660. Residues 654–831 (SAERRNSILT…EEINEEDLKE (178 aa)) form a disordered R region region. Serine 670 carries the post-translational modification Phosphoserine; by PKA. The residue at position 686 (serine 686) is a Phosphoserine. Lysine 688 is covalently cross-linked (Glycyl lysine isopeptide (Lys-Gly) (interchain with G-Cter in ubiquitin)). Phosphoserine occurs at positions 700 and 712. Residue threonine 717 is modified to Phosphothreonine. Phosphoserine is present on residues serine 737, serine 753, serine 768, serine 790, serine 795, and serine 813. A helical transmembrane segment spans residues 859–879 (LIFVLIWCLVIFLAEVAASLV). The region spanning 859–1155 (LIFVLIWCLV…AVNSSIDVDS (297 aa)) is the ABC transmembrane type-1 2 domain. Over 880 to 918 (VLWLLGNTPLQDKGNSTHSRNNSYAVIITSTSSYYVFYI) the chain is Extracellular. Asparagine 894 and asparagine 900 each carry an N-linked (GlcNAc...) asparagine glycan. A discontinuously helical membrane pass occupies residues 919–939 (YVGVADTLLAMGFFRGLPLVH). Over 940-990 (TLITVSKILHHKMLHSVLQAPMSTLNTLKAGGILNRFSKDIAILDDLLPLT) the chain is Cytoplasmic. Residues 991-1011 (IFDFIQLLLIVIGAIAVVAVL) traverse the membrane as a helical segment. Topologically, residues 1012–1013 (QP) are extracellular. Residues 1014-1034 (YIFVATVPVIVAFIMLRAYFL) form a helical membrane-spanning segment. Topologically, residues 1035-1095 (QTSQQLKQLE…TANWFLYLST (61 aa)) are cytoplasmic. Residues 1096-1116 (LRWFQMRIEMIFVIFFIAVTF) form a helical membrane-spanning segment. The Extracellular segment spans residues 1117–1130 (ISILTTGEGEGRVG). The chain crosses the membrane as a helical span at residues 1131–1151 (IILTLAMNIMSTLQWAVNSSI). Over 1152-1480 (DVDSLMRSVS…TEEEVQDTRL (329 aa)) the chain is Cytoplasmic. The ABC transporter 2 domain occupies 1210–1443 (MTVKDLTAKY…RSLFRQAISP (234 aa)). ATP-binding positions include tyrosine 1219 and 1244-1251 (GRTGSGKS). The interval 1386 to 1480 (RTLKQAFADC…TEEEVQDTRL (95 aa)) is interaction with GORASP2. A lipid anchor (S-palmitoyl cysteine) is attached at cysteine 1395. Phosphoserine is present on residues serine 1444 and serine 1456. The segment at 1452–1480 (HRNSSKCKSKPQIAALKEETEEEVQDTRL) is disordered. Residues 1470–1480 (ETEEEVQDTRL) show a composition bias toward acidic residues. A PDZ-binding motif is present at residues 1478–1480 (TRL).

Belongs to the ABC transporter superfamily. ABCC family. CFTR transporter (TC 3.A.1.202) subfamily. In terms of assembly, monomer; does not require oligomerization for channel activity. May form oligomers in the membrane. Interacts with SLC26A3, SLC26A6 and NHERF1. Interacts with SHANK2. Interacts with MYO6. Interacts (via C-terminus) with GOPC (via PDZ domain); this promotes CFTR internalization and thereby decreases channel activity. Interacts with SLC4A7 through NHERF1. Found in a complex with MYO5B and RAB11A. Interacts with ANO1. Interacts with SLC26A8. Interacts with AHCYL1; the interaction increases CFTR activity. Interacts with CSE1L. The core-glycosylated form interacts with GORASP2 (via PDZ GRASP-type 1 domain) in respone to ER stress. Interacts with MARCHF2; the interaction leads to CFTR ubiqtuitination and degradation. Interacts with ADGRG2. Post-translationally, N-glycosylated. Phosphorylated; cAMP treatment promotes phosphorylation and activates the channel. Dephosphorylation decreases the ATPase activity (in vitro). Phosphorylation at PKA sites activates the channel. Phosphorylation at PKC sites enhances the response to phosphorylation by PKA. Phosphorylated by AMPK; this inhibits channel activity. In terms of processing, ubiquitinated, leading to its degradation in the lysosome. Deubiquitination by USP10 in early endosomes enhances its endocytic recycling to the cell membrane. Ubiquitinated by RNF185 during ER stress. Ubiquitinated by MARCHF2.

It is found in the apical cell membrane. It localises to the early endosome membrane. The protein resides in the cell membrane. Its subcellular location is the recycling endosome membrane. The protein localises to the endoplasmic reticulum membrane. It is found in the nucleus. The catalysed reaction is ATP + H2O + closed Cl(-) channel = ADP + phosphate + open Cl(-) channel.. The enzyme catalyses chloride(in) = chloride(out). It catalyses the reaction hydrogencarbonate(in) = hydrogencarbonate(out). It carries out the reaction ATP + H2O = ADP + phosphate + H(+). Its function is as follows. Epithelial ion channel that plays an important role in the regulation of epithelial ion and water transport and fluid homeostasis. Mediates the transport of chloride ions across the cell membrane. Possesses an intrinsic ATPase activity and utilizes ATP to gate its channel; the passive flow of anions through the channel is gated by cycles of ATP binding and hydrolysis by the ATP-binding domains. The ion channel is also permeable to HCO(3)(-); selectivity depends on the extracellular chloride concentration. Exerts its function also by modulating the activity of other ion channels and transporters. Contributes to the regulation of the pH and the ion content of the epithelial fluid layer. Modulates the activity of the epithelial sodium channel (ENaC) complex, in part by regulating the cell surface expression of the ENaC complex. May regulate bicarbonate secretion and salvage in epithelial cells by regulating the transporter SLC4A7. Can inhibit the chloride channel activity of ANO1. Plays a role in the chloride and bicarbonate homeostasis during sperm epididymal maturation and capacitation. The chain is Cystic fibrosis transmembrane conductance regulator from Pan troglodytes (Chimpanzee).